The sequence spans 176 residues: 2-C-methyl-D-erythritol 2,4-cyclodiphosphate synthase (176 aa).

A divalent metal cation contacts are provided by Asp22 and His24. 4-CDP-2-C-methyl-D-erythritol 2-phosphate is bound by residues 22 to 24 (DVH) and 48 to 49 (HS). An a divalent metal cation-binding site is contributed by His56. 4-CDP-2-C-methyl-D-erythritol 2-phosphate is bound by residues 70 to 72 (DIG), 146 to 149 (TTSE), Phe153, and Arg156.

The protein belongs to the IspF family. Homotrimer. The cofactor is a divalent metal cation.

The enzyme catalyses 4-CDP-2-C-methyl-D-erythritol 2-phosphate = 2-C-methyl-D-erythritol 2,4-cyclic diphosphate + CMP. It functions in the pathway isoprenoid biosynthesis; isopentenyl diphosphate biosynthesis via DXP pathway; isopentenyl diphosphate from 1-deoxy-D-xylulose 5-phosphate: step 4/6. Functionally, involved in the biosynthesis of isopentenyl diphosphate (IPP) and dimethylallyl diphosphate (DMAPP), two major building blocks of isoprenoid compounds. Catalyzes the conversion of 4-diphosphocytidyl-2-C-methyl-D-erythritol 2-phosphate (CDP-ME2P) to 2-C-methyl-D-erythritol 2,4-cyclodiphosphate (ME-CPP) with a corresponding release of cytidine 5-monophosphate (CMP). The polypeptide is 2-C-methyl-D-erythritol 2,4-cyclodiphosphate synthase (Xylella fastidiosa (strain 9a5c)).